A 176-amino-acid chain; its full sequence is Ribosome maturation factor RimM (176 aa).

Residues 97–176 form the PRC barrel domain; it reads EDEFYWRDLI…QILVDWDPDF (80 aa).

Belongs to the RimM family. In terms of assembly, binds ribosomal protein uS19.

It localises to the cytoplasm. Functionally, an accessory protein needed during the final step in the assembly of 30S ribosomal subunit, possibly for assembly of the head region. Essential for efficient processing of 16S rRNA. May be needed both before and after RbfA during the maturation of 16S rRNA. It has affinity for free ribosomal 30S subunits but not for 70S ribosomes. This Shewanella sp. (strain MR-4) protein is Ribosome maturation factor RimM.